Here is a 332-residue protein sequence, read N- to C-terminus: Ectoine dioxygenase (332 aa).

Polar residues predominate over residues 1-10 (MSVQTSSNRP). Positions 1 to 47 (MSVQTSSNRPLPQANLHIATETPEADSRIRSAPRPGQDPYPTRLSEP) are disordered. Gln163 contributes to the L-ectoine binding site. A 2-oxoglutarate-binding site is contributed by Lys169. Residues His180, Asp182, and His281 each contribute to the Fe cation site.

Belongs to the PhyH family. EctD subfamily. In terms of assembly, homodimer. Requires Fe(2+) as cofactor.

It carries out the reaction L-ectoine + 2-oxoglutarate + O2 = 5-hydroxyectoine + succinate + CO2. In terms of biological role, involved in the biosynthesis of 5-hydroxyectoine, called compatible solute, which helps organisms to survive extreme osmotic stress by acting as a highly soluble organic osmolyte. Catalyzes the 2-oxoglutarate-dependent selective hydroxylation of L-ectoine to yield (4S,5S)-5-hydroxyectoine. The polypeptide is Ectoine dioxygenase (Halomonas elongata (strain ATCC 33173 / DSM 2581 / NBRC 15536 / NCIMB 2198 / 1H9)).